Here is a 111-residue protein sequence, read N- to C-terminus: MIKRETRLRAKILGINANASSHNGECGNASSEITTVWIIEHMKNNLVTKWLNRVLHTSLKMVWYVYRGFNNSLGVCIICLPCNVLSSSQSHLLIAKESALPVSDSRCYYIL.

This is an uncharacterized protein from Saccharomyces cerevisiae (strain ATCC 204508 / S288c) (Baker's yeast).